The chain runs to 415 residues: MAAACPGTAVPVWLSEEDLSCIICQGLLDWPTTLPCGHSFCLQCLKDLWVSKRAGVDSCPWACPICRKGPSAKPVLHKNPLLQDLVDKYRQAALELEAGPEPAPVPRSLCTPTPPQVTVQKSTTQVVQELTELVGQLVDIVKSLQTQRPSLASGLDNALGILHMDSSSEEEYPLDSPKLVTFSASQKKIQEILRDLEKIQETLQGSVTGNEAPKKQVEEMASSVGLLPDQRYPVSRKASQFSLWAISPTFDLRSLSCNLEVSNNCRMVTVSRALQPYHWSSERFSISQVLCSQAFSSGQKYWEVDTRNCSHWAVGVASWGMKRDKMLGRTMDSWCIEWRGPSQFSAWAMMKKTDLSSGPPEVVGVWLDLELGKLAFYSVADQERPLYECEVSSSSPLHPAFWLYGLTPGNYLEIL.

The RING-type zinc finger occupies 21–67 (CIICQGLLDWPTTLPCGHSFCLQCLKDLWVSKRAGVDSCPWACPICR). A coiled-coil region spans residues 181-206 (TFSASQKKIQEILRDLEKIQETLQGS). Residues 228 to 415 (PDQRYPVSRK…LTPGNYLEIL (188 aa)) enclose the B30.2/SPRY domain.

Homodimer. Interacts (homodimer) with RIGI (double-stranded RNA-bound oligomeric form); involved in both RIGI ubiquitination, oligomerization into filaments associated with viral RNAs and the bridging of these filaments. Interacts with UBE2D3 and UBE2N; E2 ubiquitin ligases involved in RNF135-mediated ubiquitination of RIGI and activation of the RIG-I signaling pathway. Interacts with PCBP2.

It localises to the cytoplasm. The protein localises to the stress granule. The catalysed reaction is S-ubiquitinyl-[E2 ubiquitin-conjugating enzyme]-L-cysteine + [acceptor protein]-L-lysine = [E2 ubiquitin-conjugating enzyme]-L-cysteine + N(6)-ubiquitinyl-[acceptor protein]-L-lysine.. It participates in protein modification; protein ubiquitination. In terms of biological role, E2-dependent E3 ubiquitin-protein ligase that functions as a RIGI coreceptor in the sensing of viral RNAs in cell cytoplasm and the activation of the antiviral innate immune response. Together with the UBE2D3, UBE2N and UB2V1 E2 ligases, catalyzes the 'Lys-63'-linked polyubiquitination of RIGI oligomerized on viral RNAs, an essential step in the activation of the RIG-I signaling pathway. Through a ubiquitin-independent parallel mechanism, which consists in bridging RIGI filaments forming on longer viral RNAs, further activates the RIG-I signaling pathway. This second mechanism that synergizes with the ubiquitin-dependent one would thereby allow an RNA length-dependent regulation of the RIG-I signaling pathway. Associated with the E2 ligase UBE2N, also constitutively synthesizes unanchored 'Lys-63'-linked polyubiquitin chains that may also activate the RIG-I signaling pathway. This Rattus norvegicus (Rat) protein is E3 ubiquitin-protein ligase RNF135.